We begin with the raw amino-acid sequence, 368 residues long: Multifunctional CCA protein (368 aa).

Residues Gly8 and Arg11 each coordinate ATP. Residues Gly8 and Arg11 each contribute to the CTP site. Residues Asp21 and Asp23 each contribute to the Mg(2+) site. Residues Arg91, Arg137, and Arg140 each contribute to the ATP site. Residues Arg91, Arg137, and Arg140 each coordinate CTP.

The protein belongs to the tRNA nucleotidyltransferase/poly(A) polymerase family. Bacterial CCA-adding enzyme type 1 subfamily. Monomer. Can also form homodimers and oligomers. Mg(2+) serves as cofactor. Ni(2+) is required as a cofactor.

It catalyses the reaction a tRNA precursor + 2 CTP + ATP = a tRNA with a 3' CCA end + 3 diphosphate. The enzyme catalyses a tRNA with a 3' CCA end + 2 CTP + ATP = a tRNA with a 3' CCACCA end + 3 diphosphate. Catalyzes the addition and repair of the essential 3'-terminal CCA sequence in tRNAs without using a nucleic acid template. Adds these three nucleotides in the order of C, C, and A to the tRNA nucleotide-73, using CTP and ATP as substrates and producing inorganic pyrophosphate. tRNA 3'-terminal CCA addition is required both for tRNA processing and repair. Also involved in tRNA surveillance by mediating tandem CCA addition to generate a CCACCA at the 3' terminus of unstable tRNAs. While stable tRNAs receive only 3'-terminal CCA, unstable tRNAs are marked with CCACCA and rapidly degraded. The sequence is that of Multifunctional CCA protein from Pseudomonas putida (strain ATCC 47054 / DSM 6125 / CFBP 8728 / NCIMB 11950 / KT2440).